The chain runs to 644 residues: MAKNLILWLVIAVVLMSVFQSFGPSESNGRKVDYSTFLQEVNNDQVREARINGREINVTKKDSNRYTTYIPVQDPKLLDNLLTKNVKVVGEPPEEPSLLASIFISWFPMLLLIGVWIFFMRQMQGGGGKGAMSFGKSKARMLTEDQIKTTFADVAGCDEAKEEVAELVEYLREPSRFQKLGGKIPKGVLMVGPPGTGKTLLAKAIAGEAKVPFFTISGSDFVEMFVGVGASRVRDMFEQAKKAAPCIIFIDEIDAVGRQRGAGLGGGHDEREQTLNQMLVEMDGFEGNEGIIVIAATNRPDVLDPALLRPGRFDRQVVVGLPDVRGREQILKVHMRRVPLAPDIDAAIIARGTPGFSGADLANLVNEAALFAARGNKRVVSMVEFEKAKDKIMMGAERRSMVMTEAQKESTAYHEAGHAIIGRLVPEHDPVHKVTIIPRGRALGVTFFLPEGDAISASRQKLESQISTLYGGRLAEEIIYGPEHVSTGASNDIKVATNLARNMVTQWGFSEKLGPLLYAEEEGEVFLGRSVAKAKHMSDETARIIDQEVKALIERNYNRARQLLTDNMDILHAMKDALMKYETIDAPQIDDLMARRDVRPPAGWEEPGASNNSGDNGSPKAPRPVDEPRTPNPGNTMSEQLGDK.

Topologically, residues 1-4 (MAKN) are cytoplasmic. Residues 5-25 (LILWLVIAVVLMSVFQSFGPS) form a helical membrane-spanning segment. The Periplasmic segment spans residues 26-98 (ESNGRKVDYS…VGEPPEEPSL (73 aa)). A helical membrane pass occupies residues 99–119 (LASIFISWFPMLLLIGVWIFF). Topologically, residues 120–644 (MRQMQGGGGK…NTMSEQLGDK (525 aa)) are cytoplasmic. Residue 192–199 (GPPGTGKT) coordinates ATP. His-414 contacts Zn(2+). Glu-415 is an active-site residue. Zn(2+) is bound by residues His-418 and Asp-492. Residues 598–644 (VRPPAGWEEPGASNNSGDNGSPKAPRPVDEPRTPNPGNTMSEQLGDK) are disordered. Polar residues predominate over residues 632 to 644 (NPGNTMSEQLGDK).

The protein in the central section; belongs to the AAA ATPase family. This sequence in the C-terminal section; belongs to the peptidase M41 family. Homohexamer. Zn(2+) is required as a cofactor.

Its subcellular location is the cell inner membrane. Functionally, acts as a processive, ATP-dependent zinc metallopeptidase for both cytoplasmic and membrane proteins. Plays a role in the quality control of integral membrane proteins. The sequence is that of ATP-dependent zinc metalloprotease FtsH from Shigella flexneri.